Here is a 432-residue protein sequence, read N- to C-terminus: Adenylosuccinate synthetase (432 aa).

GTP contacts are provided by residues 13-19 (GDEGKGK) and 41-43 (GHT). Aspartate 14 serves as the catalytic Proton acceptor. Mg(2+) contacts are provided by aspartate 14 and glycine 41. IMP-binding positions include 14-17 (DEGK), 39-42 (NAGH), threonine 130, arginine 144, glutamine 225, threonine 240, and arginine 304. Histidine 42 acts as the Proton donor in catalysis. 300-306 (AVTGRPR) is a binding site for substrate. Residues arginine 306, 332-334 (KLD), and 415-417 (STG) contribute to the GTP site.

Belongs to the adenylosuccinate synthetase family. In terms of assembly, homodimer. It depends on Mg(2+) as a cofactor.

It is found in the cytoplasm. The catalysed reaction is IMP + L-aspartate + GTP = N(6)-(1,2-dicarboxyethyl)-AMP + GDP + phosphate + 2 H(+). It participates in purine metabolism; AMP biosynthesis via de novo pathway; AMP from IMP: step 1/2. Plays an important role in the de novo pathway of purine nucleotide biosynthesis. Catalyzes the first committed step in the biosynthesis of AMP from IMP. This Actinobacillus pleuropneumoniae serotype 3 (strain JL03) protein is Adenylosuccinate synthetase.